The sequence spans 190 residues: MQKKFEDCVKTILEIIGENPNREGLIKTPNRVFKAYEFLTSGYTQNVKEILNDALFESSNNEMVLVRDIEFYSLCEHHLLPFFGRAHVAYIPNKKVVGLSKIPRLVEVFARRLQIQEQLTEQIAQALMENVDAKGVGVVIEARHMCVEMRGVQKANSTTTTSALRGIFLKNEKTREEFFSLINSAKQVRF.

Zn(2+) is bound by residues Cys75, His78, and Cys146.

Belongs to the GTP cyclohydrolase I family. Homomer.

The enzyme catalyses GTP + H2O = 7,8-dihydroneopterin 3'-triphosphate + formate + H(+). Its pathway is cofactor biosynthesis; 7,8-dihydroneopterin triphosphate biosynthesis; 7,8-dihydroneopterin triphosphate from GTP: step 1/1. This Campylobacter jejuni subsp. jejuni serotype O:6 (strain 81116 / NCTC 11828) protein is GTP cyclohydrolase 1.